A 345-amino-acid chain; its full sequence is uncharacterized protein (345 aa).

It localises to the cell membrane. Its function is as follows. Involved in potassium and divalent cation transport. Enhances the transport activity of the cation/potassium transporter CzcD. This is an uncharacterized protein from Bacillus velezensis (strain DSM 23117 / BGSC 10A6 / LMG 26770 / FZB42) (Bacillus amyloliquefaciens subsp. plantarum).